We begin with the raw amino-acid sequence, 108 residues long: UPF0145 protein MADE_1007770 (108 aa).

This sequence belongs to the UPF0145 family.

The polypeptide is UPF0145 protein MADE_1007770 (Alteromonas mediterranea (strain DSM 17117 / CIP 110805 / LMG 28347 / Deep ecotype)).